Consider the following 370-residue polypeptide: MELATMGKVNEVLFMNGGEGEISYAQNSSFTEKVASMAMPALENAVETLFSKDFHLLPALNAADLGCAAGPNTFAVISMIKRMMEKKCRELYCQTPELQVYLNDLFGNDFNTLFKGLSSEVVGNKCEEVSCYVMGVPGSFHGRLFPRNSLHLVHSSYSVHWLTQAPKGLTSREGLALNKGKIYISKTSPPAVKEAYLSQFHEDFTMFLNARSQEVVPNGCMVLILHGRQSSDPSEMESCFTWELLAIAIAELVSQGLIDEDKLDTFNVPSYFPSLEEVKDIVERDGSFTIDHLEGFELDSLEMQENDKWVRGDKFAKMVRAFTEPIISNQFGHEIMDKLYDKFTHIVVSDLEAELPKTTSIILVLSKIVG.

Residue Tyr24 coordinates S-adenosyl-L-homocysteine. Thr31 is a theobromine binding site. S-adenosyl-L-homocysteine-binding residues include Cys67, Asn72, Asp104, Leu105, Ser139, and Phe140. Theobromine is bound by residues Tyr157, His160, and Trp161. Mg(2+) is bound at residue Asn178. His226 contacts theobromine. Mg(2+) contacts are provided by Asp264, Phe266, and Asn267. A theobromine-binding site is contributed by Phe322.

Belongs to the methyltransferase superfamily. Type-7 methyltransferase family. The cofactor is Mg(2+).

The catalysed reaction is 7-methylxanthine + S-adenosyl-L-methionine = theobromine + S-adenosyl-L-homocysteine + H(+). It functions in the pathway alkaloid biosynthesis. Its function is as follows. Involved in the biosynthesis of caffeine in cv. Puer. Involved in the biosynthesis of theacrine in cv. Kucha, a caffeine-like xanthine alkaloid with diverse beneficial biological activities including anti-depressive, sedative, and hypnotic activities, improving learning and memory, increasing exercise activity, and preventing nonalcoholic fatty liver disease. Catalyzes the conversion of 7-methylxanthine (7mX) to theobromine but not able to convert paraxanthine to caffeine. The chain is 3,7-dimethylxanthine N-methyltransferase CkTbS from Camellia sinensis var. assamica (Assam tea).